The sequence spans 448 residues: Signal recognition particle protein (448 aa).

GTP contacts are provided by residues 101–108, 182–186, and 240–243; these read GLQGSGKT, DSAGR, and SKFD.

The protein belongs to the GTP-binding SRP family. SRP54 subfamily. In terms of assembly, part of the signal recognition particle protein translocation system, which is composed of SRP and FtsY. SRP is a ribonucleoprotein composed of Ffh and a 4.5S RNA molecule.

The protein resides in the cytoplasm. The catalysed reaction is GTP + H2O = GDP + phosphate + H(+). Functionally, involved in targeting and insertion of nascent membrane proteins into the cytoplasmic membrane. Binds to the hydrophobic signal sequence of the ribosome-nascent chain (RNC) as it emerges from the ribosomes. The SRP-RNC complex is then targeted to the cytoplasmic membrane where it interacts with the SRP receptor FtsY. Interaction with FtsY leads to the transfer of the RNC complex to the Sec translocase for insertion into the membrane, the hydrolysis of GTP by both Ffh and FtsY, and the dissociation of the SRP-FtsY complex into the individual components. In Helicobacter pylori (strain ATCC 700392 / 26695) (Campylobacter pylori), this protein is Signal recognition particle protein.